The chain runs to 182 residues: uncharacterized protein (182 aa).

4 helical membrane-spanning segments follow: residues 19–39 (LFGI…SIVS), 51–71 (IYLV…VVFI), 87–107 (IFTV…IELF), and 118–138 (CSPF…LAMC).

The protein resides in the membrane. This is an uncharacterized protein from Caenorhabditis elegans.